A 1255-amino-acid polypeptide reads, in one-letter code: Pre-mRNA-splicing factor ATP-dependent RNA helicase DEAH7 (1255 aa).

Residues 1 to 316 form a disordered region; the sequence is MGVDPFKTTE…SDEDRSQGAE (316 aa). Positions 13-60 are enriched in basic and acidic residues; sequence EADKETNGGVPVKDKLTFKAPERKSRLGLDARAIEKKDNAKTEGEFKV. The span at 109–137 shows a compositional bias: polar residues; sequence AQESTVTTENAGTSDISITPRTLSCTSSY. 2 short sequence motifs (nuclear localization signal) span residues 144 to 153 and 172 to 191; these read RHREEHRRDR and RRRE…KRRR. Residues 144-219 show a composition bias toward basic and acidic residues; sequence RHREEHRRDR…EWERSPHGDR (76 aa). 2 stretches are compositionally biased toward low complexity: residues 220-240 and 271-290; these read GSSY…AASP and PIRA…GGRS. The segment covering 297-316 has biased composition (basic and acidic residues); sequence REGDLTNEGHSDEDRSQGAE. In terms of domain architecture, Helicase ATP-binding spans 568 to 731; it reads LQVIRENQVI…FGSVPIFNIP (164 aa). ATP is bound at residue 581-588; sequence GETGSGKT. Residues 678 to 681 carry the DEAH box motif; sequence DEAH. The Helicase C-terminal domain maps to 753 to 933; that stretch reads AVKQAMTIHI…NVVLLLKSLK (181 aa). Residues 1190–1224 are compositionally biased toward basic and acidic residues; it reads LEHKKKQKEEKSGMEEEMEKLRRDQVESELRSKER. The segment at 1190–1255 is disordered; that stretch reads LEHKKKQKEE…TFLRPKKLGL (66 aa).

It belongs to the DEAD box helicase family. DEAH subfamily. PRP16 sub-subfamily. Interacts with the Phytophthora PSR1 protein.

It localises to the nucleus. The catalysed reaction is ATP + H2O = ADP + phosphate + H(+). Involved in pre-mRNA splicing by mediating structural transitions of the spliceosome during the catalytic step. Facilitates expression of genes involved in auxin-mediated development including male-gametophyte transmission, apical-basal patterning of embryonic and gynoecium development, stamen development, phyllotactic flower positioning, and vascular development. Also involved in root-meristem maintenance and planar polarity of root-hair positioning. Acts as a component of RNA silencing that regulates distinct classes of endogenous small RNAs. Functions as a positive regulator of plant immunity. This Arabidopsis thaliana (Mouse-ear cress) protein is Pre-mRNA-splicing factor ATP-dependent RNA helicase DEAH7.